Here is an 86-residue protein sequence, read N- to C-terminus: Gas vesicle protein A1 (86 aa).

Belongs to the gas vesicle GvpA family. In terms of assembly, the gas vesicle shell is 2 nm thick and consists of a single layer of this protein. It forms helical ribs nearly perpendicular to the long axis of the vesicle.

Its subcellular location is the gas vesicle shell. Its function is as follows. Gas vesicles are hollow, gas filled proteinaceous nanostructures found in some microorganisms. During planktonic growth they allow positioning of the organism at a favorable depth for light or nutrient acquisition. GvpA forms the protein shell. It is not clear if the 2 type A proteins in this organism are functionally redundant. Functionally, when the full gvp locus (gvpA1-gvpP-gvpQ-gvpA2-gvpR-gvpN-gvpF-gvpG-gvpL-gvpS-gvpK-gvpJ-gvpT-gvpU, called pNL26) is expressed in E.coli gas vesicles are made. The polypeptide is Gas vesicle protein A1 (Priestia megaterium (Bacillus megaterium)).